Here is a 147-residue protein sequence, read N- to C-terminus: Putative pre-16S rRNA nuclease (147 aa).

The protein belongs to the YqgF nuclease family.

The protein localises to the cytoplasm. In terms of biological role, could be a nuclease involved in processing of the 5'-end of pre-16S rRNA. This chain is Putative pre-16S rRNA nuclease, found in Polynucleobacter necessarius subsp. necessarius (strain STIR1).